A 259-amino-acid chain; its full sequence is Putative protein phosphatase (259 aa).

Residues Leu-8–Leu-255 form the PPM-type phosphatase domain.

It carries out the reaction O-phospho-L-seryl-[protein] + H2O = L-seryl-[protein] + phosphate. The catalysed reaction is O-phospho-L-threonyl-[protein] + H2O = L-threonyl-[protein] + phosphate. The sequence is that of Putative protein phosphatase from Mycoplasma pneumoniae (strain ATCC 29342 / M129 / Subtype 1) (Mycoplasmoides pneumoniae).